Consider the following 315-residue polypeptide: Glucokinase-like protein CC_3167 (315 aa).

It belongs to the bacterial glucokinase family.

The sequence is that of Glucokinase-like protein CC_3167 from Caulobacter vibrioides (strain ATCC 19089 / CIP 103742 / CB 15) (Caulobacter crescentus).